Reading from the N-terminus, the 168-residue chain is Cytochrome c-type biogenesis protein CcmE (168 aa).

Over M1–R7 the chain is Cytoplasmic. A helical; Signal-anchor for type II membrane protein transmembrane segment spans residues L8–A28. The Periplasmic portion of the chain corresponds to M29–Q168. Residues H122 and Y126 each contribute to the heme site. The tract at residues A134–Q168 is disordered.

It belongs to the CcmE/CycJ family.

Its subcellular location is the cell inner membrane. In terms of biological role, heme chaperone required for the biogenesis of c-type cytochromes. Transiently binds heme delivered by CcmC and transfers the heme to apo-cytochromes in a process facilitated by CcmF and CcmH. In Methylobacterium nodulans (strain LMG 21967 / CNCM I-2342 / ORS 2060), this protein is Cytochrome c-type biogenesis protein CcmE.